The primary structure comprises 291 residues: Acetyl-coenzyme A carboxylase carboxyl transferase subunit beta (291 aa).

The disordered stretch occupies residues Met-1 to Ser-23. Residues Leu-28–Ala-291 enclose the CoA carboxyltransferase N-terminal domain. Positions 32, 35, 51, and 54 each coordinate Zn(2+). A C4-type zinc finger spans residues Cys-32–Cys-54.

Belongs to the AccD/PCCB family. As to quaternary structure, acetyl-CoA carboxylase is a heterohexamer composed of biotin carboxyl carrier protein (AccB), biotin carboxylase (AccC) and two subunits each of ACCase subunit alpha (AccA) and ACCase subunit beta (AccD). Zn(2+) is required as a cofactor.

It is found in the cytoplasm. The enzyme catalyses N(6)-carboxybiotinyl-L-lysyl-[protein] + acetyl-CoA = N(6)-biotinyl-L-lysyl-[protein] + malonyl-CoA. Its pathway is lipid metabolism; malonyl-CoA biosynthesis; malonyl-CoA from acetyl-CoA: step 1/1. In terms of biological role, component of the acetyl coenzyme A carboxylase (ACC) complex. Biotin carboxylase (BC) catalyzes the carboxylation of biotin on its carrier protein (BCCP) and then the CO(2) group is transferred by the transcarboxylase to acetyl-CoA to form malonyl-CoA. The polypeptide is Acetyl-coenzyme A carboxylase carboxyl transferase subunit beta (Stenotrophomonas maltophilia (strain R551-3)).